The sequence spans 142 residues: MLNEFKEFIARGNVMDLAVGVIIGAAFSKIVDSVVNDLVMPVVGAITGGGFDFSNYFLPLSASVTAPTLSAAREQGAVFAYGNFITVLINFLILAWIIFLLIKLVNRARASVERDKAPDPAAPPPQDILLLSEIRDLLRQRA.

3 helical membrane passes run 14-34, 38-58, and 82-102; these read VMDLAVGVIIGAAFSKIVDSV, LVMPVVGAITGGGFDFSNYFL, and GNFITVLINFLILAWIIFLLI.

Belongs to the MscL family. As to quaternary structure, homopentamer.

The protein resides in the cell inner membrane. In terms of biological role, channel that opens in response to stretch forces in the membrane lipid bilayer. May participate in the regulation of osmotic pressure changes within the cell. The sequence is that of Large-conductance mechanosensitive channel from Rhizobium meliloti (strain 1021) (Ensifer meliloti).